The chain runs to 357 residues: H-2 class I histocompatibility antigen, D-37 alpha chain (357 aa).

The signal sequence occupies residues 1-20; that stretch reads MLLFAHLLQLLVSATVPTQS. The tract at residues 21–110 is alpha-1; sequence SPHSLRYFTT…LLGYYNQSND (90 aa). Residues 21-304 lie on the Extracellular side of the membrane; that stretch reads SPHSLRYFTT…EPPPSTVSNM (284 aa). Asparagine 106 carries N-linked (GlcNAc...) asparagine glycosylation. The tract at residues 111–202 is alpha-2; that stretch reads ESHTLQWMYG…RLGNETLQRS (92 aa). An intrachain disulfide couples cysteine 121 to cysteine 184. Asparagine 196 is a glycosylation site (N-linked (GlcNAc...) asparagine). Residues 203 to 294 form an alpha-3 region; the sequence is DPPKAHVTHH…GLPEPLTLRW (92 aa). An Ig-like C1-type domain is found at 205-293; it reads PKAHVTHHPR…EGLPEPLTLR (89 aa). Cysteine 223 and cysteine 279 form a disulfide bridge. Residues 295 to 304 are connecting peptide; it reads EPPPSTVSNM. Residues 305-327 traverse the membrane as a helical segment; that stretch reads VIIAVLVVLGAVIILGAVVAFVM. Topologically, residues 328 to 357 are cytoplasmic; the sequence is KRRRHIGVKGCYAHVLGSKSFQTSDWPQKA. Serine 347 bears the Phosphoserine mark.

It belongs to the MHC class I family. As to quaternary structure, heterodimer of an alpha chain and a beta chain (beta-2-microglobulin).

Its subcellular location is the membrane. Its function is as follows. Involved in the presentation of foreign antigens to the immune system. The polypeptide is H-2 class I histocompatibility antigen, D-37 alpha chain (H2-T23) (Mus musculus (Mouse)).